The primary structure comprises 555 residues: CTP synthase (555 aa).

Residues 1-277 (MPKEPETEYD…DQHVMERLNV (277 aa)) are amidoligase domain. CTP is bound at residue Ser-26. Ser-26 serves as a coordination point for UTP. 27–32 (GLGKGI) contacts ATP. Tyr-67 contributes to the L-glutamine binding site. Asp-84 contributes to the ATP binding site. Residues Asp-84 and Glu-152 each coordinate Mg(2+). CTP is bound by residues 159-161 (DIE), 198-203 (KTKPTQ), and Lys-234. Residues 198-203 (KTKPTQ) and Lys-234 contribute to the UTP site. The Glutamine amidotransferase type-1 domain maps to 307 to 542 (LVGKYDLEDA…LKSVDSTLDA (236 aa)). Gly-364 contacts L-glutamine. The Nucleophile; for glutamine hydrolysis role is filled by Cys-391. Residues 392–395 (LGFQ), Glu-415, and Arg-472 each bind L-glutamine. Catalysis depends on residues His-515 and Glu-517.

This sequence belongs to the CTP synthase family. In terms of assembly, homotetramer.

The enzyme catalyses UTP + L-glutamine + ATP + H2O = CTP + L-glutamate + ADP + phosphate + 2 H(+). The catalysed reaction is L-glutamine + H2O = L-glutamate + NH4(+). It carries out the reaction UTP + NH4(+) + ATP = CTP + ADP + phosphate + 2 H(+). The protein operates within pyrimidine metabolism; CTP biosynthesis via de novo pathway; CTP from UDP: step 2/2. Allosterically activated by GTP, when glutamine is the substrate; GTP has no effect on the reaction when ammonia is the substrate. The allosteric effector GTP functions by stabilizing the protein conformation that binds the tetrahedral intermediate(s) formed during glutamine hydrolysis. Inhibited by the product CTP, via allosteric rather than competitive inhibition. Catalyzes the ATP-dependent amination of UTP to CTP with either L-glutamine or ammonia as the source of nitrogen. Regulates intracellular CTP levels through interactions with the four ribonucleotide triphosphates. The protein is CTP synthase of Haloquadratum walsbyi (strain DSM 16790 / HBSQ001).